A 220-amino-acid chain; its full sequence is Ribonuclease HII (220 aa).

One can recognise an RNase H type-2 domain in the interval 32–220 (KHIVGIDEAG…FAPIKGRYSV (189 aa)). Positions 38, 39, and 130 each coordinate a divalent metal cation.

It belongs to the RNase HII family. The cofactor is Mn(2+). It depends on Mg(2+) as a cofactor.

The protein localises to the cytoplasm. The catalysed reaction is Endonucleolytic cleavage to 5'-phosphomonoester.. Its function is as follows. Endonuclease that specifically degrades the RNA of RNA-DNA hybrids. This Brucella anthropi (strain ATCC 49188 / DSM 6882 / CCUG 24695 / JCM 21032 / LMG 3331 / NBRC 15819 / NCTC 12168 / Alc 37) (Ochrobactrum anthropi) protein is Ribonuclease HII.